The primary structure comprises 128 residues: Probable 4-amino-4-deoxy-L-arabinose-phosphoundecaprenol flippase subunit ArnF (128 aa).

Topologically, residues 1–2 (MG) are cytoplasmic. Residues 3 to 23 (LIWGLFSVIIASVAQLSLGFA) traverse the membrane as a helical segment. Residues 24–35 (ASHLPPMTHLWD) are Periplasmic-facing. Residues 36–56 (FIAALLAFGLDARILLLGLLG) form a helical membrane-spanning segment. At 57–76 (YLLSVFCWYKTLHKLALSKA) the chain is on the cytoplasmic side. The chain crosses the membrane as a helical span at residues 77–97 (YALLSMSYVLVWIASMVLPGW). Topologically, residues 98–100 (EGT) are periplasmic. The chain crosses the membrane as a helical span at residues 101–121 (FSLKALLGVACIMSGLMLIFL). The Cytoplasmic segment spans residues 122–128 (PTTKQRY).

It belongs to the ArnF family. In terms of assembly, heterodimer of ArnE and ArnF.

It localises to the cell inner membrane. Its pathway is bacterial outer membrane biogenesis; lipopolysaccharide biosynthesis. Functionally, translocates 4-amino-4-deoxy-L-arabinose-phosphoundecaprenol (alpha-L-Ara4N-phosphoundecaprenol) from the cytoplasmic to the periplasmic side of the inner membrane. This Shigella boydii serotype 4 (strain Sb227) protein is Probable 4-amino-4-deoxy-L-arabinose-phosphoundecaprenol flippase subunit ArnF.